A 708-amino-acid polypeptide reads, in one-letter code: Large T antigen (708 aa).

Met1 is modified (N-acetylmethionine; by host). In terms of domain architecture, J spans 12–75 (QLMDLLGLER…VKYAHQPDFG (64 aa)). A binding of LT to the CUL7 complex region spans residues 63 to 89 (EDGVKYAHQPDFGGFWDATEIPTYGTD). The LXCXE motif signature appears at 103-107 (LFCSE). Residues Ser106, Ser112, Ser120, and Ser123 each carry the phosphoserine; by host modification. The tract at residues 109–134 (MPSSDDEATADSQHSTPPKKKRKVED) is disordered. Residue Thr124 is modified to Phosphothreonine; by host. The short motif at 125-132 (PPKKKRKV) is the Nuclear localization signal element. Residues 139-254 (PSELLSFLSH…EESLPGGLKE (116 aa)) constitute a DNA-binding region (T-ag OBD). The T-ag D1-type zinc finger occupies 265–357 (TKQVSWKLVT…KRVDSLQLTR (93 aa)). The Zn(2+) site is built by Cys302, Cys305, His313, and His317. Residues 337–672 (CQQAVDTVLA…IDSQSQGSFQ (336 aa)) form a binding to host TP53 protein region. Residues 400 to 560 (KMDSVVYDFL…DYLKHCLERS (161 aa)) enclose the SF3 helicase domain. The tract at residues 418–616 (KKRYWLFKGP…FSLSVYQKMK (199 aa)) is ATPase activity. An ATP-binding site is contributed by 426-433 (GPIDSGKT). The C-terminal region stretch occupies residues 627 to 708 (DWLRNSDDDD…PPTPPPEPET (82 aa)). Positions 630–685 (RNSDDDDEDSQENADKNEDGGEKNMEDSGHETGIDSQSQGSFQAPQSSQSVHDHNQ) are disordered. Ser639 is subject to Phosphoserine; by host. Positions 642-662 (NADKNEDGGEKNMEDSGHETG) are enriched in basic and acidic residues. Polar residues predominate over residues 663–679 (IDSQSQGSFQAPQSSQS). 3 positions are modified to phosphoserine; by host: Ser676, Ser677, and Ser679. Residue Lys697 is modified to N6-acetyllysine; by host. A CPD region spans residues 699–708 (PPTPPPEPET). Residue Thr701 is modified to Phosphothreonine; by host.

As to quaternary structure, isoform large T antigen forms homohexamers in the presence of ATP. Interacts with host HDAC1. Interacts (via LXCXE domain) with host RB1; the interaction induces the aberrant dissociation of RB1-E2F1 complex thereby disrupting RB1's activity. Interacts (via LXCXE domain) with host pRB-related proteins RBL1 and RBL2. Interacts (via C-terminus) with host TOP1 and POLA1 allowing DNA replication. Interacts with host TP53, inhibiting TP53 binding to DNA. Interacts with host preinitiation complex components TBP, TFIIA and TFIID to regulate transcription initiation. LT interacts (via CPD region) with host FBW7gamma isoform (via WD repeats); seems to function as a competitive inhibitor of FBW7gamma function for physiologic substrates. LT interacts with host E3 ubiquitin ligase CUL7; this interaction seems to inhibit CUL7. Component of a SCF(CUL7)-like complex composed of SV40 Lt and host proteins CUL7, SKP1, RBX1, and FBXW8. LT interacts with host BUB1; this interaction induces activation of a DNA damage response and promotes p53 stabilization and phosphorylation. Interacts with host FAM111A and this interaction is required for efficient viral replication and sustained viral gene expression in restrictive cell types. The cofactor is Mg(2+). In terms of processing, phosphorylated on both serine and threonine residues. Phosphorylation on Ser-120 and Ser-123 inhibits viral replication, while phosphorylation on Thr-124 enhances replication by activating the DNA-binding domain. Phosphorylation on Thr-701 is required for binding to host FBW7gamma isoform. Dephosphorylated preferentially by PP2A on Ser-120, Ser-123, Ser-677 and perhaps Ser-679. Small t antigen inhibits the dephosphorylation by the AC form of PP2A. Post-translationally, O-Glycosylated near the C-terminal region. Acetylated by CBP in a TP53-dependent manner.

The protein resides in the host nucleus. It carries out the reaction Couples ATP hydrolysis with the unwinding of duplex DNA by translocating in the 3'-5' direction.. It catalyses the reaction ATP + H2O = ADP + phosphate + H(+). With respect to regulation, DNA helicase activity is inhibited by ATP-gamma-S. Its function is as follows. Isoform large T antigen is a key early protein essential for both driving viral replication and inducing cellular transformation. Plays a role in viral genome replication by driving entry of quiescent cells into the cell cycle and by autoregulating the synthesis of viral early mRNA. Displays highly oncogenic activities by corrupting the host cellular checkpoint mechanisms that guard cell division and the transcription, replication, and repair of DNA. Participates in the modulation of cellular gene expression preceeding viral DNA replication. This step involves binding to host key cell cycle regulators retinoblastoma protein RB1/pRb and TP53. Induces the disassembly of host E2F1 transcription factors from RB1, thus promoting transcriptional activation of E2F1-regulated S-phase genes. Inhibits host TP53 binding to DNA, abrogating the ability of TP53 to stimulate gene expression. Plays the role of a TFIID-associated factor (TAF) in transcription initiation for all three RNA polymerases, by stabilizing the TBP-TFIIA complex on promoters. Initiates viral DNA replication and unwinding via interactions with the viral origin of replication. Binds two adjacent sites in the SV40 origin. The replication fork movement is facilitated by Large T antigen helicase activity. Has processive 3'-5' DNA helicase activity which requires a short 3' single-stranded region and ATP; other (d)NTPs can partially replace ATP. Activates the transcription of viral late mRNA, through host TBP and TFIIA stabilization. Interferes with histone deacetylation mediated by HDAC1, leading to activation of transcription. May inactivate the growth-suppressing properties of the E3 ubiquitin ligase CUL7. Functionally, isoform 17kT antigen targets host RBL2 for degradation and promotes cell proliferation. Transactivates host cyclin A promoter through its J domain. Unwinds G4 DNA (planar arrays of 4 guanine bases stabilized by hydrogen bonds, parallel and antiparallel arrays were tested); unwinding occurs in the 3'-5' direction, requires a 3' single-stranded end and hydrolyzable ATP. This is Large T antigen from Macaca (macaques).